The sequence spans 162 residues: 2-C-methyl-D-erythritol 2,4-cyclodiphosphate synthase (162 aa).

A divalent metal cation is bound by residues aspartate 10 and histidine 12. Residues 10-12 (DVH) and 36-37 (HS) each bind 4-CDP-2-C-methyl-D-erythritol 2-phosphate. Residue histidine 44 coordinates a divalent metal cation. 4-CDP-2-C-methyl-D-erythritol 2-phosphate is bound by residues 58–60 (DIG), 63–67 (FPDTD), 102–108 (AQAPKMA), 134–137 (TTTE), phenylalanine 141, and arginine 144.

The protein belongs to the IspF family. In terms of assembly, homotrimer. A divalent metal cation serves as cofactor.

It catalyses the reaction 4-CDP-2-C-methyl-D-erythritol 2-phosphate = 2-C-methyl-D-erythritol 2,4-cyclic diphosphate + CMP. Its pathway is isoprenoid biosynthesis; isopentenyl diphosphate biosynthesis via DXP pathway; isopentenyl diphosphate from 1-deoxy-D-xylulose 5-phosphate: step 4/6. Its function is as follows. Involved in the biosynthesis of isopentenyl diphosphate (IPP) and dimethylallyl diphosphate (DMAPP), two major building blocks of isoprenoid compounds. Catalyzes the conversion of 4-diphosphocytidyl-2-C-methyl-D-erythritol 2-phosphate (CDP-ME2P) to 2-C-methyl-D-erythritol 2,4-cyclodiphosphate (ME-CPP) with a corresponding release of cytidine 5-monophosphate (CMP). This chain is 2-C-methyl-D-erythritol 2,4-cyclodiphosphate synthase, found in Pseudoalteromonas atlantica (strain T6c / ATCC BAA-1087).